Here is a 501-residue protein sequence, read N- to C-terminus: Lysine--tRNA ligase (501 aa).

Residues Glu-411 and Glu-418 each contribute to the Mg(2+) site.

This sequence belongs to the class-II aminoacyl-tRNA synthetase family. As to quaternary structure, homodimer. The cofactor is Mg(2+).

The protein localises to the cytoplasm. The enzyme catalyses tRNA(Lys) + L-lysine + ATP = L-lysyl-tRNA(Lys) + AMP + diphosphate. This Clostridium perfringens (strain SM101 / Type A) protein is Lysine--tRNA ligase.